A 387-amino-acid polypeptide reads, in one-letter code: 1-deoxy-D-xylulose 5-phosphate reductoisomerase (387 aa).

NADPH-binding residues include threonine 10, glycine 11, serine 12, isoleucine 13, glycine 36, arginine 37, and asparagine 124. Lysine 125 is a 1-deoxy-D-xylulose 5-phosphate binding site. Glutamate 126 is a binding site for NADPH. Aspartate 150 contributes to the Mn(2+) binding site. Positions 151, 152, 176, and 199 each coordinate 1-deoxy-D-xylulose 5-phosphate. Mn(2+) is bound at residue glutamate 152. Glycine 205 is an NADPH binding site. The 1-deoxy-D-xylulose 5-phosphate site is built by serine 212, asparagine 217, lysine 218, and glutamate 221. Glutamate 221 contacts Mn(2+).

Belongs to the DXR family. Requires Mg(2+) as cofactor. It depends on Mn(2+) as a cofactor.

The enzyme catalyses 2-C-methyl-D-erythritol 4-phosphate + NADP(+) = 1-deoxy-D-xylulose 5-phosphate + NADPH + H(+). It participates in isoprenoid biosynthesis; isopentenyl diphosphate biosynthesis via DXP pathway; isopentenyl diphosphate from 1-deoxy-D-xylulose 5-phosphate: step 1/6. In terms of biological role, catalyzes the NADPH-dependent rearrangement and reduction of 1-deoxy-D-xylulose-5-phosphate (DXP) to 2-C-methyl-D-erythritol 4-phosphate (MEP). The sequence is that of 1-deoxy-D-xylulose 5-phosphate reductoisomerase from Cyanothece sp. (strain PCC 7425 / ATCC 29141).